A 1446-amino-acid chain; its full sequence is MNEDHEAGNSSREAEVHQLARQFTDQSNYSAAGQNPFAVEAGSALDPNGEHFNARAWCKAMLQMHTGDKQAHPLRTLGVAFSNLNVHGFGSDTDYQKSVGNVWLEVLSLVSKAFGQKQRKIEILQNMEGLVEAGEMLVVLGPPGSGCSTFLKTIAGETYGFHVDKNSNINFQGIAKQMAHEFRGEAIYTAEVDVHFPKLTVGDTLYFAARARAPRHIPGGVNATQYASHMRDVIMAMFGISHTKNTIVGNDFIRGVSGGERKRVSIAEACLSNAPLQCWDNSTRGLDSANAIEFCKTLRMQADINGTTACVSLYQAPQAAYDYFDKALVLYEGREIYFGRTSMAKQYFLDMGFVCPDRQTDADFLTSMTSHLERVVQPGYEGRVPRTPDEFAARWRASPQRAQLLQDIKCYNAKFALDGEYLDKLKQSRRAQQAKAQRVSSPYTLSYVQQVELCLWRGYQRLKADPSVTISSVFGNTIISLVIASIFYNLKADTSTFFQRGALLFFAVLMNALGCGLEMLTLYAQRGIIEKHSRYALYHPSAEAFSSMIMDLPYKIINAITSNIVLYFMTNLRREPGAFFFFVFTSFVLTLTMSMFFRSMASLSRSLVQALPFSAVLLLGLSMYTGFTIPTGYMLGWARWIAYINPISYGFESLLINEFHNRDFPCMNYVPSGPGYTDLGLNNRVCSTVGSVPGQAFVNGDAYIESAYIYTASHKWRNIGVIFAYMFLLAAVYLVATDFITEKKSKGEILVFPRGHEALKKGKSDEDLEEGSGRSVTVEKTGSDGLTMIERQTAIFQWKDVCFDIKIGKENRRILDHVDGWVKPGTLTALMGVSGAGKTTLLDVLATRTSVGIISGEILVDGQPRDDSFQRKTGYAQQQDLHLSTATVREALEFSALLRQSAHVPRQEKIDYVTEVIKLLDMTEYADAVIGVPGEGLNVEQRKRLTIGVELAARPQLLLFLDEPTSGLDSQTSWAILDLLDKLKKNGQAILCTIHQPSAMLFQRFDRLLFLQAGGRTVYFGEVGENSQILIDYFVRNGGPPCPPAANPAEWMLDVIGAAPGSHTNINWFETWRKSPEYARVQEHLAELKRERPEQTNLFRTTSSQKREDKASYREFAAPFCAQLCEVQVRVFQQIWRSPTYIYSKTALCVLSALFVGFSLFHTPNTIQGLQNQMFGIFMLLTVFGQLIQQIMPHFVAQRALYEVRERPAKTYSWKAFIISNIVVELPWNSLMSVLMFLCWYYPIGLYRNAEPTDAVSLRGTQMWLMVWTFLLFSSTFAHFMIAAFDAAENAGNLGNLLFLLCLIFCGVLATPGQLPGFWIFMYRVSPFTYLVSGMLSVGISNTNATCADNEYLRFDPVNGTCGKYMDSYISNMGGYLEDEMATSDCSFCPIKETNVFLSSVSSSYSEIWRNFGLMWVFIVFNIFAACLLYWWVRVPRVKKPVAKTE.

N-linked (GlcNAc...) asparagine glycosylation is found at asparagine 9, asparagine 28, asparagine 222, asparagine 281, and asparagine 305. The ABC transporter 1 domain maps to 104–357 (LEVLSLVSKA…FLDMGFVCPD (254 aa)). The next 6 helical transmembrane spans lie at 468–488 (VTIS…SIFY), 502–522 (ALLF…MLTL), 548–568 (MIMD…VLYF), 577–597 (GAFF…SMFF), 610–630 (ALPF…FTIP), and 719–739 (IGVI…ATDF). The 243-residue stretch at 796–1038 (FQWKDVCFDI…ILIDYFVRNG (243 aa)) folds into the ABC transporter 2 domain. 832-839 (GVSGAGKT) is a binding site for ATP. The next 5 membrane-spanning stretches (helical) occupy residues 1147–1167 (ALCV…PNTI), 1177–1197 (IFML…HFVA), 1217–1237 (FIIS…VLMF), 1265–1285 (LMVW…IAAF), and 1301–1321 (LCLI…FWIF). N-linked (GlcNAc...) asparagine glycosylation is found at asparagine 1344 and asparagine 1359. The helical transmembrane segment at 1412 to 1432 (FGLMWVFIVFNIFAACLLYWW) threads the bilayer.

The protein belongs to the ABC transporter superfamily. ABCG family. PDR (TC 3.A.1.205) subfamily.

The protein localises to the cell membrane. Its function is as follows. ABC-type transporter; part of the gene cluster that mediates the biosynthesis of the sesterterpenes ophiobolins, fungal phytotoxins with potential anti-cancer activities. Acts as a specific transporter involved in ophiobolins secretion. This chain is ABC-type transporter oblD, found in Aspergillus clavatus (strain ATCC 1007 / CBS 513.65 / DSM 816 / NCTC 3887 / NRRL 1 / QM 1276 / 107).